We begin with the raw amino-acid sequence, 656 residues long: Histidine decarboxylase (656 aa).

Positions 84 and 197 each coordinate substrate. K308 bears the N6-(pyridoxal phosphate)lysine mark. S343 and S362 each carry phosphoserine; by PKA. The segment at 481–502 (HCTSQPSPRAKNLIPPPVTRDS) is disordered.

The protein belongs to the group II decarboxylase family. Homodimer. The cofactor is pyridoxal 5'-phosphate. May be post-translationally processed. Brain, glandular regions of the stomach, mast cells and fetal liver.

It catalyses the reaction L-histidine + H(+) = histamine + CO2. It functions in the pathway amine and polyamine biosynthesis; histamine biosynthesis; histamine from L-histidine: step 1/1. Its activity is regulated as follows. Phosphorylation of brain HDC by cAMP-dependent protein kinase leads to enzyme inactivation. Functionally, catalyzes the biosynthesis of histamine from histidine. This is Histidine decarboxylase (Hdc) from Rattus norvegicus (Rat).